We begin with the raw amino-acid sequence, 722 residues long: Polyribonucleotide nucleotidyltransferase (722 aa).

Mg(2+)-binding residues include Asp487 and Asp493. The 60-residue stretch at 554-613 (PRMVSFKIHPDKIREVIGKGGATIQALTKETGCSIDIKDDGTVTIASTSAEGMAEAKARI) folds into the KH domain. The 69-residue stretch at 623 to 691 (GKIYEGPVVK…ERGRLRLSLK (69 aa)) folds into the S1 motif domain.

It belongs to the polyribonucleotide nucleotidyltransferase family. It depends on Mg(2+) as a cofactor.

Its subcellular location is the cytoplasm. The enzyme catalyses RNA(n+1) + phosphate = RNA(n) + a ribonucleoside 5'-diphosphate. In terms of biological role, involved in mRNA degradation. Catalyzes the phosphorolysis of single-stranded polyribonucleotides processively in the 3'- to 5'-direction. The chain is Polyribonucleotide nucleotidyltransferase from Polynucleobacter asymbioticus (strain DSM 18221 / CIP 109841 / QLW-P1DMWA-1) (Polynucleobacter necessarius subsp. asymbioticus).